Consider the following 631-residue polypeptide: 1-deoxy-D-xylulose-5-phosphate synthase (631 aa).

Residues His-74 and Gly-115–Ser-117 each bind thiamine diphosphate. Asp-146 is a binding site for Mg(2+). Thiamine diphosphate-binding positions include Gly-147–Ala-148, Asn-175, Tyr-286, and Glu-368. Asn-175 contributes to the Mg(2+) binding site.

The protein belongs to the transketolase family. DXPS subfamily. In terms of assembly, homodimer. Requires Mg(2+) as cofactor. Thiamine diphosphate serves as cofactor.

The enzyme catalyses D-glyceraldehyde 3-phosphate + pyruvate + H(+) = 1-deoxy-D-xylulose 5-phosphate + CO2. It participates in metabolic intermediate biosynthesis; 1-deoxy-D-xylulose 5-phosphate biosynthesis; 1-deoxy-D-xylulose 5-phosphate from D-glyceraldehyde 3-phosphate and pyruvate: step 1/1. Functionally, catalyzes the acyloin condensation reaction between C atoms 2 and 3 of pyruvate and glyceraldehyde 3-phosphate to yield 1-deoxy-D-xylulose-5-phosphate (DXP). The chain is 1-deoxy-D-xylulose-5-phosphate synthase from Natranaerobius thermophilus (strain ATCC BAA-1301 / DSM 18059 / JW/NM-WN-LF).